Here is an 83-residue protein sequence, read N- to C-terminus: Hainantoxin-III 6 (83 aa).

An N-terminal signal peptide occupies residues 1–21 (MKASMFLALAGLVLLFVVGYA). A propeptide spanning residues 22 to 48 (SESEEKESPRELLSKIFAVDDFKGEER) is cleaved from the precursor. 3 disulfide bridges follow: Cys50–Cys65, Cys57–Cys70, and Cys64–Cys77. Leucine amide is present on Leu81.

The protein belongs to the neurotoxin 10 (Hwtx-1) family. 15 (Hntx-3) subfamily. Monomer. As to expression, expressed by the venom gland.

The protein localises to the secreted. In terms of biological role, selective antagonist of neuronal tetrodotoxin (TTX)-sensitive voltage-gated sodium channels (IC(50)=1270 nM on Nav1.1/SCN1A, 270 nM on Nav1.2/SCN2A, 491 nM on Nav1.3/SCN3A and 232 nM on Nav1.7/SCN9A). This toxin suppress Nav1.7 current amplitude without significantly altering the activation, inactivation, and repriming kinetics. Short extreme depolarizations partially activate the toxin-bound channel, indicating voltage-dependent inhibition of this toxin. This toxin increases the deactivation of the Nav1.7 current after extreme depolarizations. The toxin-Nav1.7 complex is gradually dissociated upon prolonged strong depolarizations in a voltage-dependent manner, and the unbound toxin rebinds to Nav1.7 after a long repolarization. Moreover, analysis of chimeric channels showed that the DIIS3-S4 linker is critical for toxin binding to Nav1.7. These data are consistent with this toxin interacting with Nav1.7 site 4 and trapping the domain II voltage sensor in the closed state. This is Hainantoxin-III 6 from Cyriopagopus hainanus (Chinese bird spider).